The sequence spans 278 residues: HTH-type transcriptional activator RhaS (278 aa).

Positions 174–272 constitute an HTH araC/xylS-type domain; that stretch reads NQLMAWLEDH…NWSPRDIRQG (99 aa). 2 consecutive DNA-binding regions (H-T-H motif) follow at residues 191 to 212 and 239 to 262; these read EAVA…KQHT and VTEI…RREF.

As to quaternary structure, binds DNA as a dimer.

The protein localises to the cytoplasm. Activates expression of the rhaBAD and rhaT operons. The protein is HTH-type transcriptional activator RhaS of Salmonella agona (strain SL483).